Reading from the N-terminus, the 370-residue chain is tRNA-specific 2-thiouridylase MnmA (370 aa).

Residues 7–14 (GISGGVDS) and Met-33 each bind ATP. Residues 104-106 (NPD) are interaction with target base in tRNA. Cys-109 functions as the Nucleophile in the catalytic mechanism. An intrachain disulfide couples Cys-109 to Cys-208. Gly-134 contacts ATP. The interval 158–160 (KDQ) is interaction with tRNA. Cys-208 acts as the Cysteine persulfide intermediate in catalysis.

It belongs to the MnmA/TRMU family.

It is found in the cytoplasm. The catalysed reaction is S-sulfanyl-L-cysteinyl-[protein] + uridine(34) in tRNA + AH2 + ATP = 2-thiouridine(34) in tRNA + L-cysteinyl-[protein] + A + AMP + diphosphate + H(+). In terms of biological role, catalyzes the 2-thiolation of uridine at the wobble position (U34) of tRNA, leading to the formation of s(2)U34. In Malacoplasma penetrans (strain HF-2) (Mycoplasma penetrans), this protein is tRNA-specific 2-thiouridylase MnmA.